We begin with the raw amino-acid sequence, 274 residues long: Dermonecrotic toxin SdSicTox-betaIIB1bv (274 aa).

The active site involves histidine 5. Mg(2+)-binding residues include glutamate 25 and aspartate 27. Residue histidine 41 is the Nucleophile of the active site. Cystine bridges form between cysteine 45–cysteine 51 and cysteine 47–cysteine 190. Aspartate 85 is a Mg(2+) binding site.

This sequence belongs to the arthropod phospholipase D family. Class II subfamily. Mg(2+) serves as cofactor. In terms of tissue distribution, expressed by the venom gland.

The protein localises to the secreted. The enzyme catalyses an N-(acyl)-sphingosylphosphocholine = an N-(acyl)-sphingosyl-1,3-cyclic phosphate + choline. It catalyses the reaction an N-(acyl)-sphingosylphosphoethanolamine = an N-(acyl)-sphingosyl-1,3-cyclic phosphate + ethanolamine. The catalysed reaction is a 1-acyl-sn-glycero-3-phosphocholine = a 1-acyl-sn-glycero-2,3-cyclic phosphate + choline. It carries out the reaction a 1-acyl-sn-glycero-3-phosphoethanolamine = a 1-acyl-sn-glycero-2,3-cyclic phosphate + ethanolamine. Dermonecrotic toxins cleave the phosphodiester linkage between the phosphate and headgroup of certain phospholipids (sphingolipid and lysolipid substrates), forming an alcohol (often choline) and a cyclic phosphate. This toxin acts on sphingomyelin (SM). It may also act on ceramide phosphoethanolamine (CPE), lysophosphatidylcholine (LPC) and lysophosphatidylethanolamine (LPE), but not on lysophosphatidylserine (LPS), and lysophosphatidylglycerol (LPG). It acts by transphosphatidylation, releasing exclusively cyclic phosphate products as second products. Induces dermonecrosis, hemolysis, increased vascular permeability, edema, inflammatory response, and platelet aggregation. This Sicarius cf. damarensis (strain GJB-2008) (Six-eyed sand spider) protein is Dermonecrotic toxin SdSicTox-betaIIB1bv.